The chain runs to 375 residues: Aminomethyltransferase (375 aa).

The protein belongs to the GcvT family. As to quaternary structure, the glycine cleavage system is composed of four proteins: P, T, L and H.

It catalyses the reaction N(6)-[(R)-S(8)-aminomethyldihydrolipoyl]-L-lysyl-[protein] + (6S)-5,6,7,8-tetrahydrofolate = N(6)-[(R)-dihydrolipoyl]-L-lysyl-[protein] + (6R)-5,10-methylene-5,6,7,8-tetrahydrofolate + NH4(+). In terms of biological role, the glycine cleavage system catalyzes the degradation of glycine. This chain is Aminomethyltransferase, found in Cupriavidus necator (strain ATCC 17699 / DSM 428 / KCTC 22496 / NCIMB 10442 / H16 / Stanier 337) (Ralstonia eutropha).